The following is a 222-amino-acid chain: Deoxyribose-phosphate aldolase (222 aa).

The Proton donor/acceptor role is filled by aspartate 91. Lysine 153 acts as the Schiff-base intermediate with acetaldehyde in catalysis. The active-site Proton donor/acceptor is the lysine 182.

The protein belongs to the DeoC/FbaB aldolase family. DeoC type 1 subfamily.

It is found in the cytoplasm. It catalyses the reaction 2-deoxy-D-ribose 5-phosphate = D-glyceraldehyde 3-phosphate + acetaldehyde. It functions in the pathway carbohydrate degradation; 2-deoxy-D-ribose 1-phosphate degradation; D-glyceraldehyde 3-phosphate and acetaldehyde from 2-deoxy-alpha-D-ribose 1-phosphate: step 2/2. Its function is as follows. Catalyzes a reversible aldol reaction between acetaldehyde and D-glyceraldehyde 3-phosphate to generate 2-deoxy-D-ribose 5-phosphate. This Mycoplasma capricolum subsp. capricolum (strain California kid / ATCC 27343 / NCTC 10154) protein is Deoxyribose-phosphate aldolase.